A 455-amino-acid chain; its full sequence is Phosphoglucosamine mutase (455 aa).

S102 acts as the Phosphoserine intermediate in catalysis. Residues S102, D241, D243, and D245 each contribute to the Mg(2+) site. S102 is modified (phosphoserine).

The protein belongs to the phosphohexose mutase family. Requires Mg(2+) as cofactor. In terms of processing, activated by phosphorylation.

The catalysed reaction is alpha-D-glucosamine 1-phosphate = D-glucosamine 6-phosphate. Functionally, catalyzes the conversion of glucosamine-6-phosphate to glucosamine-1-phosphate. This chain is Phosphoglucosamine mutase, found in Legionella pneumophila (strain Paris).